Reading from the N-terminus, the 227-residue chain is DNA utilization protein YhgH (227 aa).

It belongs to the ComF/GntX family.

In terms of biological role, required for the use of extracellular DNA as a nutrient. Has been suggested to be involved in gluconate metabolism. The sequence is that of DNA utilization protein YhgH from Escherichia coli (strain K12).